Consider the following 206-residue polypeptide: Guanylate kinase (206 aa).

Residues 4–182 (ANLFIISAPS…AVQNLIHIIS (179 aa)) enclose the Guanylate kinase-like domain. 11–18 (APSGAGKT) provides a ligand contact to ATP.

It belongs to the guanylate kinase family.

Its subcellular location is the cytoplasm. The catalysed reaction is GMP + ATP = GDP + ADP. In terms of biological role, essential for recycling GMP and indirectly, cGMP. This chain is Guanylate kinase, found in Coxiella burnetii (strain RSA 493 / Nine Mile phase I).